A 372-amino-acid polypeptide reads, in one-letter code: Chaperone protein DnaJ (372 aa).

In terms of domain architecture, J spans 5–70 (DYYDLLEVGR…EKRAGYDRYG (66 aa)). A CR-type zinc finger spans residues 134 to 212 (GIQAPIHYVT…CGGSGRRRDE (79 aa)). Zn(2+) is bound by residues C147, C150, C164, C167, C186, C189, C200, and C203. CXXCXGXG motif repeat units follow at residues 147 to 154 (CDTCQGTG), 164 to 171 (CHTCQGSG), 186 to 193 (CTTCYGEG), and 200 to 207 (CKKCGGSG).

Belongs to the DnaJ family. Homodimer. The cofactor is Zn(2+).

Its subcellular location is the cytoplasm. In terms of biological role, participates actively in the response to hyperosmotic and heat shock by preventing the aggregation of stress-denatured proteins and by disaggregating proteins, also in an autonomous, DnaK-independent fashion. Unfolded proteins bind initially to DnaJ; upon interaction with the DnaJ-bound protein, DnaK hydrolyzes its bound ATP, resulting in the formation of a stable complex. GrpE releases ADP from DnaK; ATP binding to DnaK triggers the release of the substrate protein, thus completing the reaction cycle. Several rounds of ATP-dependent interactions between DnaJ, DnaK and GrpE are required for fully efficient folding. Also involved, together with DnaK and GrpE, in the DNA replication of plasmids through activation of initiation proteins. The polypeptide is Chaperone protein DnaJ (Wolbachia pipientis wMel).